The chain runs to 367 residues: UDP-N-acetylglucosamine--N-acetylmuramyl-(pentapeptide) pyrophosphoryl-undecaprenol N-acetylglucosamine transferase (367 aa).

Residues 15–17 (TGG), Asn127, Arg163, Ser191, Ile249, and Gln294 contribute to the UDP-N-acetyl-alpha-D-glucosamine site.

The protein belongs to the glycosyltransferase 28 family. MurG subfamily.

The protein resides in the cell inner membrane. It catalyses the reaction di-trans,octa-cis-undecaprenyl diphospho-N-acetyl-alpha-D-muramoyl-L-alanyl-D-glutamyl-meso-2,6-diaminopimeloyl-D-alanyl-D-alanine + UDP-N-acetyl-alpha-D-glucosamine = di-trans,octa-cis-undecaprenyl diphospho-[N-acetyl-alpha-D-glucosaminyl-(1-&gt;4)]-N-acetyl-alpha-D-muramoyl-L-alanyl-D-glutamyl-meso-2,6-diaminopimeloyl-D-alanyl-D-alanine + UDP + H(+). The protein operates within cell wall biogenesis; peptidoglycan biosynthesis. Functionally, cell wall formation. Catalyzes the transfer of a GlcNAc subunit on undecaprenyl-pyrophosphoryl-MurNAc-pentapeptide (lipid intermediate I) to form undecaprenyl-pyrophosphoryl-MurNAc-(pentapeptide)GlcNAc (lipid intermediate II). The chain is UDP-N-acetylglucosamine--N-acetylmuramyl-(pentapeptide) pyrophosphoryl-undecaprenol N-acetylglucosamine transferase from Burkholderia thailandensis (strain ATCC 700388 / DSM 13276 / CCUG 48851 / CIP 106301 / E264).